The sequence spans 535 residues: CTP synthase (535 aa).

The interval 1–267 (MTKYIFVTGG…DQIVLDHFGV (267 aa)) is amidoligase domain. Residue S13 participates in CTP binding. S13 provides a ligand contact to UTP. Position 14–19 (14–19 (SLGKGI)) interacts with ATP. Y54 provides a ligand contact to L-glutamine. D71 is a binding site for ATP. Mg(2+)-binding residues include D71 and E141. CTP is bound by residues 148–150 (DIE), 188–193 (KTKPTQ), and K224. Residues 188-193 (KTKPTQ) and K224 contribute to the UTP site. One can recognise a Glutamine amidotransferase type-1 domain in the interval 292–535 (KIALVGKYVA…VAAASREVKD (244 aa)). Position 354 (G354) interacts with L-glutamine. C381 acts as the Nucleophile; for glutamine hydrolysis in catalysis. L-glutamine contacts are provided by residues 382–385 (LGMQ), E405, and R463. Residues H508 and E510 contribute to the active site.

Belongs to the CTP synthase family. Homotetramer.

The enzyme catalyses UTP + L-glutamine + ATP + H2O = CTP + L-glutamate + ADP + phosphate + 2 H(+). It catalyses the reaction L-glutamine + H2O = L-glutamate + NH4(+). It carries out the reaction UTP + NH4(+) + ATP = CTP + ADP + phosphate + 2 H(+). It participates in pyrimidine metabolism; CTP biosynthesis via de novo pathway; CTP from UDP: step 2/2. With respect to regulation, allosterically activated by GTP, when glutamine is the substrate; GTP has no effect on the reaction when ammonia is the substrate. The allosteric effector GTP functions by stabilizing the protein conformation that binds the tetrahedral intermediate(s) formed during glutamine hydrolysis. Inhibited by the product CTP, via allosteric rather than competitive inhibition. Functionally, catalyzes the ATP-dependent amination of UTP to CTP with either L-glutamine or ammonia as the source of nitrogen. Regulates intracellular CTP levels through interactions with the four ribonucleotide triphosphates. This is CTP synthase from Levilactobacillus brevis (strain ATCC 367 / BCRC 12310 / CIP 105137 / JCM 1170 / LMG 11437 / NCIMB 947 / NCTC 947) (Lactobacillus brevis).